The following is a 404-amino-acid chain: Multidrug resistance protein MdtG (404 aa).

A run of 11 helical transmembrane segments spans residues 19 to 39 (LGCF…PLYV), 56 to 76 (LVFS…GGLA), 90 to 110 (LGMA…QFLI), 113 to 133 (ALLG…ATQV), 144 to 164 (TLST…GLLA), 171 to 191 (PVFF…FFFI), 222 to 242 (LFVT…ILTL), 254 to 274 (IAFI…LSAP), 288 to 308 (ILIV…FVQT), 317 to 337 (FLLG…LVYN), and 376 to 396 (AVFC…WNSL).

Belongs to the major facilitator superfamily. DHA1 family. MdtG (TC 2.A.1.2.20) subfamily.

It localises to the cell inner membrane. The chain is Multidrug resistance protein MdtG from Salmonella agona (strain SL483).